A 734-amino-acid chain; its full sequence is 1,4-alpha-glucan branching enzyme GlgB (734 aa).

The Nucleophile role is filled by Asp-414. Glu-467 functions as the Proton donor in the catalytic mechanism.

The protein belongs to the glycosyl hydrolase 13 family. GlgB subfamily. Monomer.

The catalysed reaction is Transfers a segment of a (1-&gt;4)-alpha-D-glucan chain to a primary hydroxy group in a similar glucan chain.. Its pathway is glycan biosynthesis; glycogen biosynthesis. Its function is as follows. Catalyzes the formation of the alpha-1,6-glucosidic linkages in glycogen by scission of a 1,4-alpha-linked oligosaccharide from growing alpha-1,4-glucan chains and the subsequent attachment of the oligosaccharide to the alpha-1,6 position. This is 1,4-alpha-glucan branching enzyme GlgB from Myxococcus xanthus (strain DK1622).